The sequence spans 405 residues: MESILALLLALALVPYQLSRGQSFQVNPPESEVAVAMGTSLQITCSMSCDEGVARVHWRGLDTSLGSVQTLPGSSILSVRGMLSDTGTPVCVGSCGSRSFQHSVKILVYAFPDQLVVSPEFLVPGQDQVVSCTAHNIWPADPNSLSFALLLGEQRLEGAQALEPEQEEEIQEAEGTPLFRMTQRWRLPSLGTPAPPALHCQVTMQLPKLVLTHRKEIPVLQSQTSPKPPNTTSAEPYILTSSSTAEAVSTGLNITTLPSAPPYPKLSPRTLSSEGPCRPKIHQDLEAGWELLCEASCGPGVTVRWTLAPGDLATYHKREAGAQAWLSVLPPGPMVEGWFQCRQDPGGEVTNLYVPGQVTPNSSSTVVLWIGSLVLGLLALVFLAYRLWKCYRPGPRPDTSSCTHL.

The N-terminal stretch at Met-1–Gly-21 is a signal peptide. Ig-like domains are found at residues Gln-22–Tyr-109 and Ala-110–Lys-227. Topologically, residues Gln-22 to Ser-364 are extracellular. 3 disulfides stabilise this stretch: Cys-45/Cys-91, Cys-49/Cys-95, and Cys-132/Cys-200. The interval Gln-221–Leu-257 is mucin-like. Residues Asn-230 and Asn-253 are each glycosylated (N-linked (GlcNAc...) asparagine). The tract at residues Thr-255 to Gly-275 is disordered. An Ig-like 3 domain is found at Pro-258 to Gln-357. The cysteines at positions 293 and 341 are disulfide-linked. An N-linked (GlcNAc...) asparagine glycan is attached at Asn-361. A helical membrane pass occupies residues Thr-365–Tyr-385. The Cytoplasmic portion of the chain corresponds to Arg-386 to Leu-405.

In terms of assembly, homodimer. In terms of processing, O-glycosylated; contains syalic acid. The Ser/Thr-rich mucin-like domain may provide possible sites for O-glycosylation. As to expression, highly expressed on high endothelial venules (HEV) of organized intestinal lymphoid tissues like the Peyer patches and mesenteric lymph nodes, and in the lamina propria of the intestine. Some expression found in the spleen, and low levels of expression in the peripheral lymph nodes and the lactating mammary gland. No expression was detected in the liver, kidneys, lungs or in normal brain. Expressed as well in brain endothelioma cells, and mucosal tissues which are in a chronic state of inflammation, such as inflamed pancreas.

It localises to the membrane. Cell adhesion leukocyte receptor expressed by mucosal venules, helps to direct lymphocyte traffic into mucosal tissues including the Peyer patches and the intestinal lamina propria. It can bind both the integrin alpha-4/beta-7 and L-selectin, regulating both the passage and retention of leukocytes. Both isoform 1 and isoform 2 can adhere to integrin alpha-4/beta-7. Isoform 2, lacking the mucin-like domain, may be specialized in supporting integrin alpha-4/beta-7-dependent adhesion strengthening, independent of L-selectin binding. The protein is Mucosal addressin cell adhesion molecule 1 (Madcam1) of Mus musculus (Mouse).